We begin with the raw amino-acid sequence, 401 residues long: 26S proteasome regulatory subunit 6A (401 aa).

189 to 196 (GPPGTGKT) is an ATP binding site.

The protein belongs to the AAA ATPase family. The 26S proteasome consists of a 20S proteasome core and two 19S regulatory subunits. The 20S proteasome core is composed of 28 subunits that are arranged in four stacked rings, resulting in a barrel-shaped structure. The two end rings are each formed by seven alpha subunits, and the two central rings are each formed by seven beta subunits. The catalytic chamber with the active sites is on the inside of the barrel.

It localises to the cytoplasm. It is found in the nucleus. Acts as a regulatory subunit of the 26S proteasome which degrades poly-ubiquitinated proteins in the cytoplasm and in the nucleus. It is essential for the regulated turnover of proteins and for the removal of misfolded proteins. The proteasome is a multicatalytic proteinase complex that is characterized by its ability to cleave peptides with Arg, Phe, Tyr, Leu, and Glu adjacent to the leaving group at neutral or slightly basic pH. The sequence is that of 26S proteasome regulatory subunit 6A (RPT5) from Encephalitozoon cuniculi (strain GB-M1) (Microsporidian parasite).